Consider the following 701-residue polypeptide: Reverse gyrase subunit A (701 aa).

The Toprim domain occupies 41 to 197; it reads MVLFIVESPN…NIYRAEFHEV (157 aa). A Mg(2+)-binding site is contributed by glutamate 47. An RG C-terminal-type zinc finger spans residues 117–143; sequence IKKCLDCGHQFVDEDKCPRCGSENIDD. Cysteine 120, cysteine 123, cysteine 133, and cysteine 136 together coordinate Zn(2+). A Mg(2+)-binding site is contributed by aspartate 166. One can recognise a Topo IA-type catalytic domain in the interval 213–602; that stretch reads NTNRVKAQLV…SFKKELIEIW (390 aa). The active-site O-(5'-phospho-DNA)-tyrosine intermediate is the tyrosine 352.

It belongs to the type IA topoisomerase family. Heterodimer of an RgyA and RgyB subunit. Zn(2+) is required as a cofactor. It depends on Mg(2+) as a cofactor.

The protein resides in the cytoplasm. Modifies the topological state of DNA by introducing positive supercoils in an ATP-dependent process. Binds to single-stranded DNA, transiently cleaves and then rejoins the end, introducing a positive supercoil in the process. The scissile phosphodiester is attacked by the catalytic tyrosine of the enzyme, resulting in the formation of a DNA-(5'-phosphotyrosyl)-enzyme intermediate. Probably involved in rewinding DNA strands in regions of the chromosome that have opened up to allow replication, transcription, DNA repair or for DNA protection. Reconstituted holoenzyme binds dsDNA a bit better than ssDNA, this subunit preferentially binds ssDNA. In isolation this subunit relaxes negatively-supercoiled DNA, and stimulates the endogenous ATPase activity of the RgyB subunit. This chain is Reverse gyrase subunit A, found in Nanoarchaeum equitans (strain Kin4-M).